Reading from the N-terminus, the 142-residue chain is uncharacterized protein (142 aa).

This is an uncharacterized protein from Pseudomonas putida (Arthrobacter siderocapsulatus).